We begin with the raw amino-acid sequence, 165 residues long: Cytochrome c-550-like protein (165 aa).

An N-terminal signal peptide occupies residues Met-1 to Ala-38. 4 residues coordinate heme c: Cys-83, Cys-86, His-87, and Cys-137.

This sequence belongs to the cytochrome c family. PsbV subfamily. The cofactor is heme c.

It is found in the cellular thylakoid membrane. Its function is as follows. Possible low-potential cytochrome c. In Synechococcus sp. (strain JA-2-3B'a(2-13)) (Cyanobacteria bacterium Yellowstone B-Prime), this protein is Cytochrome c-550-like protein (psbV2).